Here is a 475-residue protein sequence, read N- to C-terminus: Flotillin-like protein 4 (475 aa).

Coiled coils occupy residues 235–255 and 305–325; these read ENQREAEVAEANSELAKKKAA and QYETKVQEANWELYKKQKEAE.

The protein belongs to the band 7/mec-2 family. Flotillin subfamily. Expressed in roots and nodules. Primarily expressed in vascular tissues. Upon induction of nodulation, expansion of expression in the root cortex in the region of elongating root hairs, which will eventually become colonized by bacteria. Expressed in the infection zone in nodules.

Its subcellular location is the membrane. It localises to the caveola. The protein resides in the cell membrane. Functionally, may act as a scaffolding protein within caveolar membranes, functionally participating in formation of caveolae or caveolae-like vesicles. Required for normal infection threads initiation and elongation and nodulation. Probably involved in polar growth of the infection thread. The sequence is that of Flotillin-like protein 4 (FLOT4) from Medicago truncatula (Barrel medic).